The sequence spans 323 residues: Probable proline iminopeptidase (323 aa).

The AB hydrolase-1 domain occupies 37-301 (VVLHGGPGSR…VIVDEAGHDA (265 aa)). The active-site Nucleophile is the Ser-114. Residue Asp-271 is part of the active site. His-299 functions as the Proton donor in the catalytic mechanism.

The protein belongs to the peptidase S33 family.

It localises to the cytoplasm. It carries out the reaction Release of N-terminal proline from a peptide.. Functionally, specifically catalyzes the removal of N-terminal proline residues from peptides. The sequence is that of Probable proline iminopeptidase from Streptomyces coelicolor (strain ATCC BAA-471 / A3(2) / M145).